Here is a 507-residue protein sequence, read N- to C-terminus: CWF19-like protein DRN1 (507 aa).

S242 carries the phosphoserine modification.

It belongs to the CWF19 family. Interacts with DBR1. Interacts with SYF1, a component of the NTC complex. Interacts with lariat-introns and lariat-intermediates.

The protein resides in the nucleus. It localises to the cytoplasm. Involved in branched RNA metabolism, modulating the turnover of lariat-intron pre-mRNAs by the lariat-debranching enzyme DBR1. Enhances the debranching activity of DBR1 in vitro. The polypeptide is CWF19-like protein DRN1 (DRN1) (Saccharomyces cerevisiae (strain ATCC 204508 / S288c) (Baker's yeast)).